Consider the following 746-residue polypeptide: Transcription factor pbcR (746 aa).

Residues 1–12 (MYPWSSTGTSPF) show a composition bias toward polar residues. The disordered stretch occupies residues 1 to 40 (MYPWSSTGTSPFSHPDNEGAESGDMSMGEEQQQPHQRRQK). Positions 47–76 (CQSCRASKVRCDQPNPGMPCLRCQKSGKPC) form a DNA-binding region, zn(2)-C6 fungal-type. The interval 109–131 (ELQDSAGDGETAHSTALRSPSQL) is disordered. A compositionally biased stretch (polar residues) spans 120 to 131 (AHSTALRSPSQL).

It localises to the nucleus. In terms of biological role, transcription factor; part of the gene cluster that mediates the biosynthesis of the diterpene ent-pimara-8(14),15-diene (PD). Acts as a positive regulator for the cluster gene. Down-regulates the expression of the penicillin gene cluster, two putative polyketide clusters, and one putative nonribosomal peptide cluster. The polypeptide is Transcription factor pbcR (Emericella nidulans (strain FGSC A4 / ATCC 38163 / CBS 112.46 / NRRL 194 / M139) (Aspergillus nidulans)).